Here is a 187-residue protein sequence, read N- to C-terminus: Small ribosomal subunit protein uS4 (187 aa).

In terms of domain architecture, S4 RNA-binding spans 105 to 174 (RRLQTLVFRK…DNHPERAKIV (70 aa)).

Belongs to the universal ribosomal protein uS4 family. Part of the 30S ribosomal subunit. Contacts protein S5. The interaction surface between S4 and S5 is involved in control of translational fidelity.

In terms of biological role, one of the primary rRNA binding proteins, it binds directly to 16S rRNA where it nucleates assembly of the body of the 30S subunit. With S5 and S12 plays an important role in translational accuracy. In Methanocaldococcus jannaschii (strain ATCC 43067 / DSM 2661 / JAL-1 / JCM 10045 / NBRC 100440) (Methanococcus jannaschii), this protein is Small ribosomal subunit protein uS4.